An 81-amino-acid polypeptide reads, in one-letter code: Gamma-conotoxin-like TeA53 (81 aa).

The signal sequence occupies residues methionine 1–alanine 19. Residues leucine 20 to arginine 42 constitute a propeptide that is removed on maturation. 3 disulfide bridges follow: cysteine 49–cysteine 63, cysteine 56–cysteine 67, and cysteine 62–cysteine 72.

It belongs to the conotoxin O2 superfamily. Expressed by the venom duct.

Its subcellular location is the secreted. In terms of biological role, gamma-conotoxins may act on voltage-gated non-specific cation pacemaker channels (HCN). In Conus textile (Cloth-of-gold cone), this protein is Gamma-conotoxin-like TeA53.